Consider the following 246-residue polypeptide: Putative pectinesterase 57 (246 aa).

2 N-linked (GlcNAc...) asparagine glycosylation sites follow: N127 and N143. Residue T152 coordinates substrate. An N-linked (GlcNAc...) asparagine glycan is attached at N174. The active-site Proton donor is the D205. Catalysis depends on D226, which acts as the Nucleophile.

The protein belongs to the pectinesterase family.

The catalysed reaction is [(1-&gt;4)-alpha-D-galacturonosyl methyl ester](n) + n H2O = [(1-&gt;4)-alpha-D-galacturonosyl](n) + n methanol + n H(+). It participates in glycan metabolism; pectin degradation; 2-dehydro-3-deoxy-D-gluconate from pectin: step 1/5. In terms of biological role, acts in the modification of cell walls via demethylesterification of cell wall pectin. The sequence is that of Putative pectinesterase 57 (PME57) from Arabidopsis thaliana (Mouse-ear cress).